Here is a 329-residue protein sequence, read N- to C-terminus: Glycerol-3-phosphate dehydrogenase [NAD(P)+] (329 aa).

Residues W11 and K101 each coordinate NADPH. Positions 101, 132, and 134 each coordinate sn-glycerol 3-phosphate. A136 contributes to the NADPH binding site. Residues K188, D241, S251, R252, and N253 each contribute to the sn-glycerol 3-phosphate site. The Proton acceptor role is filled by K188. R252 serves as a coordination point for NADPH. E278 lines the NADPH pocket.

It belongs to the NAD-dependent glycerol-3-phosphate dehydrogenase family.

It localises to the cytoplasm. The catalysed reaction is sn-glycerol 3-phosphate + NAD(+) = dihydroxyacetone phosphate + NADH + H(+). The enzyme catalyses sn-glycerol 3-phosphate + NADP(+) = dihydroxyacetone phosphate + NADPH + H(+). It participates in membrane lipid metabolism; glycerophospholipid metabolism. Functionally, catalyzes the reduction of the glycolytic intermediate dihydroxyacetone phosphate (DHAP) to sn-glycerol 3-phosphate (G3P), the key precursor for phospholipid synthesis. The sequence is that of Glycerol-3-phosphate dehydrogenase [NAD(P)+] from Onion yellows phytoplasma (strain OY-M).